We begin with the raw amino-acid sequence, 224 residues long: Cytidylate kinase (224 aa).

10 to 18 (GPASAGKST) provides a ligand contact to ATP.

Belongs to the cytidylate kinase family. Type 1 subfamily.

Its subcellular location is the cytoplasm. It catalyses the reaction CMP + ATP = CDP + ADP. It carries out the reaction dCMP + ATP = dCDP + ADP. The protein is Cytidylate kinase of Leuconostoc mesenteroides subsp. mesenteroides (strain ATCC 8293 / DSM 20343 / BCRC 11652 / CCM 1803 / JCM 6124 / NCDO 523 / NBRC 100496 / NCIMB 8023 / NCTC 12954 / NRRL B-1118 / 37Y).